Reading from the N-terminus, the 176-residue chain is Large ribosomal subunit protein uL10 (176 aa).

It belongs to the universal ribosomal protein uL10 family. In terms of assembly, part of the ribosomal stalk of the 50S ribosomal subunit. The N-terminus interacts with L11 and the large rRNA to form the base of the stalk. The C-terminus forms an elongated spine to which L12 dimers bind in a sequential fashion forming a multimeric L10(L12)X complex.

Forms part of the ribosomal stalk, playing a central role in the interaction of the ribosome with GTP-bound translation factors. This chain is Large ribosomal subunit protein uL10, found in Hahella chejuensis (strain KCTC 2396).